We begin with the raw amino-acid sequence, 388 residues long: Succinate--CoA ligase [ADP-forming] subunit beta (388 aa).

Residues 9-246 enclose the ATP-grasp domain; it reads KDILRQFGVP…FEEEDPAEVL (238 aa). ATP is bound by residues lysine 46, 53–55, glutamate 99, alanine 102, and glutamate 107; that span reads GRG. 2 residues coordinate Mg(2+): asparagine 201 and aspartate 215. Substrate is bound by residues asparagine 266 and 323 to 325; that span reads GIM.

Belongs to the succinate/malate CoA ligase beta subunit family. As to quaternary structure, heterotetramer of two alpha and two beta subunits. The cofactor is Mg(2+).

The catalysed reaction is succinate + ATP + CoA = succinyl-CoA + ADP + phosphate. The enzyme catalyses GTP + succinate + CoA = succinyl-CoA + GDP + phosphate. The protein operates within carbohydrate metabolism; tricarboxylic acid cycle; succinate from succinyl-CoA (ligase route): step 1/1. Succinyl-CoA synthetase functions in the citric acid cycle (TCA), coupling the hydrolysis of succinyl-CoA to the synthesis of either ATP or GTP and thus represents the only step of substrate-level phosphorylation in the TCA. The beta subunit provides nucleotide specificity of the enzyme and binds the substrate succinate, while the binding sites for coenzyme A and phosphate are found in the alpha subunit. The sequence is that of Succinate--CoA ligase [ADP-forming] subunit beta from Verminephrobacter eiseniae (strain EF01-2).